The sequence spans 319 residues: Acetyl-coenzyme A carboxylase carboxyl transferase subunit alpha (319 aa).

In terms of domain architecture, CoA carboxyltransferase C-terminal spans 35-296 (NIDEEVHRLR…KAQLLEDLAD (262 aa)).

It belongs to the AccA family. Acetyl-CoA carboxylase is a heterohexamer composed of biotin carboxyl carrier protein (AccB), biotin carboxylase (AccC) and two subunits each of ACCase subunit alpha (AccA) and ACCase subunit beta (AccD).

Its subcellular location is the cytoplasm. The catalysed reaction is N(6)-carboxybiotinyl-L-lysyl-[protein] + acetyl-CoA = N(6)-biotinyl-L-lysyl-[protein] + malonyl-CoA. Its pathway is lipid metabolism; malonyl-CoA biosynthesis; malonyl-CoA from acetyl-CoA: step 1/1. Functionally, component of the acetyl coenzyme A carboxylase (ACC) complex. First, biotin carboxylase catalyzes the carboxylation of biotin on its carrier protein (BCCP) and then the CO(2) group is transferred by the carboxyltransferase to acetyl-CoA to form malonyl-CoA. The sequence is that of Acetyl-coenzyme A carboxylase carboxyl transferase subunit alpha from Salmonella paratyphi C (strain RKS4594).